The sequence spans 469 residues: Ufm1-specific protease 2 (469 aa).

Met-1 is subject to N-acetylmethionine. Active-site residues include Cys-302, Asp-426, and His-428.

It belongs to the peptidase C78 family.

It is found in the endoplasmic reticulum. It localises to the cytoplasm. Its subcellular location is the nucleus. Functionally, thiol-dependent isopeptidase that specifically cleaves UFM1, a ubiquitin-like modifier protein, from conjugated proteins, such as CD274/PD-L1, CYB5R3, DDRGK1, MRE11, RPL26/uL24, TRIP4 and RPL26/uL24. While it is also able to mediate the processing of UFM1 precursors, a prerequisite for conjugation reactions, UFSP2 mainly acts as a protein deUFMylase that mediates deconjugation of UFM1 from target proteins. Mediates deUFMylation of RPL26/uL24, a critical step to release the UFM1 ribosome E3 ligase (UREL) complex during the recycling of 60S ribosome subunits from the endoplasmic reticulum. Catalyzes deUFMylation of TRIP4, regulating intracellular nuclear receptors transactivation and thereby regulate cell proliferation and differentiation. This chain is Ufm1-specific protease 2, found in Pongo abelii (Sumatran orangutan).